A 430-amino-acid polypeptide reads, in one-letter code: Sesquiterpene synthase Agr5 (430 aa).

The first 25 residues, 1–25 (MASSLLEPSLAAIALVILLASVSLS), serve as a signal peptide directing secretion. Asn-113 is a glycosylation site (N-linked (GlcNAc...) asparagine). Positions 176, 311, 315, and 319 each coordinate Mg(2+). The short motif at 176-180 (DEYTD) is the DDXXD motif element. Residues Arg-401 and Tyr-402 each coordinate (2E,6E)-farnesyl diphosphate.

Belongs to the terpene synthase family. Mg(2+) is required as a cofactor.

The enzyme catalyses (2E,6E)-farnesyl diphosphate = viridiflorene + diphosphate. Functionally, terpene cyclase that catalyzes the cyclization of farnesyl diphosphate (FPP) to viridiflorene and viridiflorol. The polypeptide is Sesquiterpene synthase Agr5 (Cyclocybe aegerita (Black poplar mushroom)).